We begin with the raw amino-acid sequence, 301 residues long: GGSCGQCRVKIKSGGGDILPTEMGHITKKEAKEGCRLACQVAVKTDMELELDEEIFGVKKWQCEVISNDNKATFIKELLLKLPEGEDVHFKAGGYIQIEAPAHVVKYADFDIPEKYRGDWDKYGLFDIVSTVNEDVLRAYSMANYPDEKGRIMLNVRIATPPSANVPAGKMSSYIFNLKAGDKVTISGPFGEFFVKETDAEMVFIGGGAGMAPMRSHIFDQLKSKKTKRKMSFWYGARSTREVFYQADFDALAAENDNFVWHVALSEPLPEDNWTGYTGFIHNVIYENYLKNHKAPEDCEY.

In terms of domain architecture, 2Fe-2S ferredoxin-type spans 1–45; the sequence is GGSCGQCRVKIKSGGGDILPTEMGHITKKEAKEGCRLACQVAVKT. The [2Fe-2S] cluster site is built by Cys4, Cys7, and Cys39. Residues 58 to 196 enclose the FAD-binding FR-type domain; the sequence is VKKWQCEVIS…SGPFGEFFVK (139 aa). Residues 199–301 are catalytic; that stretch reads DAEMVFIGGG…NHKAPEDCEY (103 aa).

The protein belongs to the NqrF family. As to quaternary structure, composed of six subunits; NqrA, NqrB, NqrC, NqrD, NqrE and NqrF. The cofactor is [2Fe-2S] cluster. FAD serves as cofactor.

It localises to the cell inner membrane. It catalyses the reaction a ubiquinone + n Na(+)(in) + NADH + H(+) = a ubiquinol + n Na(+)(out) + NAD(+). In terms of biological role, NQR complex catalyzes the reduction of ubiquinone-1 to ubiquinol by two successive reactions, coupled with the transport of Na(+) ions from the cytoplasm to the periplasm. The first step is catalyzed by NqrF, which accepts electrons from NADH and reduces ubiquinone-1 to ubisemiquinone by a one-electron transfer pathway. The protein is Na(+)-translocating NADH-quinone reductase subunit F (nqrF) of Shewanella putrefaciens (Pseudomonas putrefaciens).